The sequence spans 3948 residues: Hybrid PKS-NRPS synthetase ucsA (3948 aa).

The 430-residue stretch at 11-440 (NEPIAVIGSG…GTNAHAILER (430 aa)) folds into the Ketosynthase family 3 (KS3) domain. Residues Cys184, His323, and His363 each act as for beta-ketoacyl synthase activity in the active site. The segment at 548 to 881 (IFTGQGAQWP…FSTAIGQLWA (334 aa)) is malonyl-CoA:ACP transacylase (MAT) domain. Positions 940–1079 (HPLLGTLGAD…GHIRLTITDF (140 aa)) are N-terminal hotdog fold. A dehydratase (DH) domain region spans residues 940–1254 (HPLLGTLGAD…IRLIPFAAAS (315 aa)). The PKS/mFAS DH domain maps to 940–1256 (HPLLGTLGAD…LIPFAAASEA (317 aa)). The active-site Proton acceptor; for dehydratase activity is His972. The interval 1098-1256 (MTEVDQNLFY…LIPFAAASEA (159 aa)) is C-terminal hotdog fold. Residue Asp1161 is the Proton donor; for dehydratase activity of the active site. A methyltransferase (MT) domain region spans residues 1299–1460 (LAHVVGQITH…LRAGFTGVET (162 aa)). The interval 1989-2165 (TYILFGLAGA…ASVIDIGPIS (177 aa)) is ketoreductase (KR) domain. One can recognise a Carrier 1 domain in the interval 2275–2357 (DVARVLRHAI…GLVDFAVDNL (83 aa)). Position 2317 is an O-(pantetheine 4'-phosphoryl)serine (Ser2317). Over residues 2381-2404 (PKAKTDAPAAAPTPASATAPGSKS) the composition is skewed to low complexity. The tract at residues 2381–2473 (PKAKTDAPAA…SSQAASLESS (93 aa)) is disordered. 2 stretches are compositionally biased toward polar residues: residues 2405 to 2418 (DGNVSSIARSADQS) and 2426 to 2437 (PQPTAILTNATA). Residues 2441-2456 (PVSPSLSVTGSTSSAA) are compositionally biased toward low complexity. The segment covering 2462 to 2473 (PTSSQAASLESS) has biased composition (polar residues). A condensation (C) domain region spans residues 2489 to 2926 (EKTLPMSYGQ…PQIFNSSKVQ (438 aa)). The segment at 2950-3355 (DIAAVQPTLT…GEFVLQARIK (406 aa)) is adenylation (A) (KR) domain. The tract at residues 3483–3507 (PLTNKGGLKETPVARPTRYQNDPIP) is disordered. One can recognise a Carrier 2 domain in the interval 3513 to 3592 (SSPFSSLDQV…QMASLLDGKD (80 aa)). Ser3552 bears the O-(pantetheine 4'-phosphoryl)serine mark. Residues 3633–3852 (LTGATGFLGL…QFVPVEDVAN (220 aa)) form a reductase (R) domain region.

It in the C-terminal section; belongs to the NRP synthetase family.

The protein operates within mycotoxin biosynthesis. Functionally, hybrid PKS-NRPS synthetase; part of the gene cluster that mediates the biosynthesis of UCS1025A, a member of the pyrrolizidinone family that acts as a strong telomerase inhibitor and displays potent antibacterial and antitumor properties. These compounds share a hemiaminal-containing pyrrolizidinone core fused with a gamma-lactone, giving a furopyrrolizidine that is connected to a decalin fragment. The polyketide synthase module (PKS) of the PKS-NRPS ucsA is responsible for the synthesis of the polyketide backbone via the condensation of an acetyl-CoA starter unit with 6 malonyl-CoA units. The downstream nonribosomal peptide synthetase (NRPS) module then amidates the carboxyl end of the polyketide with a 2S,3S-methylproline derived from L-isoleucine by the 2-oxoglutarate-dependent dioxygenase ucsF which converts L-isoleucine to (4S,5S)-4-methylpyrroline-5-carboxylate that is further converted to 2S,3S-methylproline by the pyrroline-5-carboxylate reductase ucsG. Reductive release of the completed aminoacyl polyketide from the assembly line can form the 3-pyrrolin-2-one structure via an intramolecular Knoevenagel reaction. Because ucsA lacks a designated enoylreductase (ER) domain, the required activity is provided the enoyl reductase ucsL. This keto acyclic precursor is the substrate of the Diels-Alderase ucsH, that catalyzes the Diels-Alder cycloaddition. Oxidation of the 3S-methyl group to a carboxylate by the cytochrome P450 monooxygenase ucsK allows an oxa-Michael cyclization that might involve the reductase/dehydrogenase ucsI and which furnishes the furopyrrolizidine. The oxidase ucsJ likely plays a critical role in stereoselective reduction of the C5-C6 double bond to afford the required R-configured carboxylate group. Further enolization and oxidation at C5 by an unidentified enzyme affords the last intermediate that can undergo oxa-Michael cyclization to yield UCS1025A. This chain is Hybrid PKS-NRPS synthetase ucsA, found in Acremonium sp.